We begin with the raw amino-acid sequence, 440 residues long: Xylose isomerase (440 aa).

Residues histidine 101 and aspartate 104 contribute to the active site. Mg(2+)-binding residues include glutamate 232, glutamate 268, histidine 271, aspartate 296, aspartate 307, aspartate 309, and aspartate 339.

It belongs to the xylose isomerase family. Homotetramer. The cofactor is Mg(2+).

It localises to the cytoplasm. It carries out the reaction alpha-D-xylose = alpha-D-xylulofuranose. The polypeptide is Xylose isomerase (Escherichia coli O17:K52:H18 (strain UMN026 / ExPEC)).